The primary structure comprises 285 residues: MVVRGILGRQRREYRAPEPHPSGARAPKLPGELIPNHVACVMDGNGRWAKERGLPRTEGHKVGEGVVMDVLKGCIELGVKNLSLYAFSTENWKRSPEEVRFLMNFNRDVIRRRRDEMDALGIRIRWVGRMPKLWKSVVQELQIAQEQTKDNDAMTLYFCVNYGGRAELADAAKAMAEDVAAGRLDPAKVSEKTIQKYLYYPDMPDVDLFLRPSGEQRTSNYLLWQSSYAEMVFQDVLWPDFDRRDLWRACVEYASRDRRFGGAVPNEQLLEMERDMKGSEGVQDA.

The segment at 11 to 30 is disordered; it reads RREYRAPEPHPSGARAPKLP. Asp43 is an active-site residue. Asp43 contributes to the Mg(2+) binding site. Substrate is bound by residues 44–47, Trp48, Arg56, His60, and 88–90; these read GNGR and STE. Asn91 (proton acceptor) is an active-site residue. Residues Trp92, Arg94, Arg211, and 217 to 219 contribute to the substrate site; that span reads RTS. Glu230 is a binding site for Mg(2+).

The protein belongs to the UPP synthase family. In terms of assembly, homodimer. It depends on Mg(2+) as a cofactor.

Catalyzes the condensation of isopentenyl diphosphate (IPP) with allylic pyrophosphates generating different type of terpenoids. This Streptomyces avermitilis (strain ATCC 31267 / DSM 46492 / JCM 5070 / NBRC 14893 / NCIMB 12804 / NRRL 8165 / MA-4680) protein is Isoprenyl transferase 2.